Reading from the N-terminus, the 391-residue chain is 8-amino-7-oxononanoate synthase (391 aa).

Arginine 19 is a binding site for substrate. 106-107 (GY) lines the pyridoxal 5'-phosphate pocket. A substrate-binding site is contributed by histidine 131. Pyridoxal 5'-phosphate-binding residues include serine 178, histidine 206, and threonine 234. Lysine 237 carries the post-translational modification N6-(pyridoxal phosphate)lysine. Threonine 353 provides a ligand contact to substrate.

This sequence belongs to the class-II pyridoxal-phosphate-dependent aminotransferase family. BioF subfamily. Homodimer. The cofactor is pyridoxal 5'-phosphate.

It carries out the reaction 6-carboxyhexanoyl-[ACP] + L-alanine + H(+) = (8S)-8-amino-7-oxononanoate + holo-[ACP] + CO2. It functions in the pathway cofactor biosynthesis; biotin biosynthesis. In terms of biological role, catalyzes the decarboxylative condensation of pimeloyl-[acyl-carrier protein] and L-alanine to produce 8-amino-7-oxononanoate (AON), [acyl-carrier protein], and carbon dioxide. The sequence is that of 8-amino-7-oxononanoate synthase from Geobacter metallireducens (strain ATCC 53774 / DSM 7210 / GS-15).